The following is a 148-amino-acid chain: Large ribosomal subunit protein uL15B (148 aa).

2 stretches are compositionally biased toward basic residues: residues 1 to 13 (MPTH…KLRG) and 21 to 31 (RIGKHRKHPGG). The disordered stretch occupies residues 1–38 (MPTHTSKTRKLRGHVSAGHGRIGKHRKHPGGRGKAGGL). A Phosphotyrosine modification is found at tyrosine 108.

It belongs to the universal ribosomal protein uL15 family. In terms of assembly, component of the large ribosomal subunit (LSU). Mature yeast ribosomes consist of a small (40S) and a large (60S) subunit. The 40S small subunit contains 1 molecule of ribosomal RNA (18S rRNA) and at least 33 different proteins. The large 60S subunit contains 3 rRNA molecules (25S, 5.8S and 5S rRNA) and at least 46 different proteins.

It is found in the cytoplasm. The protein localises to the nucleus. Its subcellular location is the nucleolus. Its function is as follows. Component of the ribosome, a large ribonucleoprotein complex responsible for the synthesis of proteins in the cell. The small ribosomal subunit (SSU) binds messenger RNAs (mRNAs) and translates the encoded message by selecting cognate aminoacyl-transfer RNA (tRNA) molecules. The large subunit (LSU) contains the ribosomal catalytic site termed the peptidyl transferase center (PTC), which catalyzes the formation of peptide bonds, thereby polymerizing the amino acids delivered by tRNAs into a polypeptide chain. The nascent polypeptides leave the ribosome through a tunnel in the LSU and interact with protein factors that function in enzymatic processing, targeting, and the membrane insertion of nascent chains at the exit of the ribosomal tunnel. This chain is Large ribosomal subunit protein uL15B (rpl2801), found in Schizosaccharomyces pombe (strain 972 / ATCC 24843) (Fission yeast).